The following is a 465-amino-acid chain: Zinc finger CCCH domain-containing protein 58 (465 aa).

The disordered stretch occupies residues 1–26; the sequence is MERYGGAGEDESRSDPSHEWSAQGTE. 3 C3H1-type zinc fingers span residues 51–79, 97–125, and 145–173; these read RPDEPDCIYYLRTGVCGYGSRCRFNHPRN, RMGQPVCQHFMRTGTCKFGASCKYHHPRQ, and RPGEKECSYFMRTGQCKFGSTCRYHHPVP. 2 disordered regions span residues 173-200 and 274-302; these read PPGVQAPSQQQQQQLSAGPTMYPSLQSQ and LSPSAPAYQSGPSSTGVSNKEQTFPQRPE. Over residues 177-191 the composition is skewed to low complexity; the sequence is QAPSQQQQQQLSAGP. Residues 283–298 are compositionally biased toward polar residues; it reads SGPSSTGVSNKEQTFP. C3H1-type zinc fingers lie at residues 300 to 328 and 345 to 373; these read RPEQPECQYFMRTGDCKFGTSCRFHHPME and RPGAVPCTHFAQHGICKFGPACKFDHSLG. Residues 397–431 are compositionally biased toward low complexity; sequence SLGTLAPSSSSDQCTELISSSSIEPITTTTGGSET. The tract at residues 397–465 is disordered; that stretch reads SLGTLAPSSS…SASNEAKTSS (69 aa). Over residues 444–453 the composition is skewed to basic and acidic residues; it reads SHPEPAETNK. Polar residues predominate over residues 454 to 465; that stretch reads GDSASNEAKTSS.

Its subcellular location is the nucleus. The chain is Zinc finger CCCH domain-containing protein 58 from Arabidopsis thaliana (Mouse-ear cress).